Here is a 185-residue protein sequence, read N- to C-terminus: Dual-action ribosomal maturation protein DarP (185 aa).

This sequence belongs to the DarP family.

It is found in the cytoplasm. Its function is as follows. Member of a network of 50S ribosomal subunit biogenesis factors which assembles along the 30S-50S interface, preventing incorrect 23S rRNA structures from forming. Promotes peptidyl transferase center (PTC) maturation. This Vibrio vulnificus (strain YJ016) protein is Dual-action ribosomal maturation protein DarP.